A 221-amino-acid chain; its full sequence is MLGVQKKRSTRKTAARKTVVRKPAAKKTAAKKAPVRKVAAKKTVARKTVAKKTVAARKPVAKKATAKKAPVRKAVAKKTVARKTVAKKTVAARKPVAKKATAKKAPVRKVAAKKTVARKTVAKKTVAARKPVAKKATAKKAPVRKAVAKKTVAKRVASTKKSSVAVKAGVCMKKHKHTAACGRVAASGVKVCASAAKRKMNPNRSRTAHSWRQQLMKLVAR.

2 stretches are compositionally biased toward basic residues: residues 1–50 (MLGV…KTVA) and 59–70 (PVAKKATAKKAP). The interval 1–70 (MLGVQKKRST…AKKATAKKAP (70 aa)) is disordered.

Belongs to the histone H1/H5 family. HCT subfamily.

Functionally, might have a role in establishing the nucleoid structure of elementary bodies. This Chlamydia trachomatis serovar L2 (strain ATCC VR-902B / DSM 19102 / 434/Bu) protein is Histone H1-like protein HC2 (hctB).